We begin with the raw amino-acid sequence, 81 residues long: Protein Vpu (81 aa).

Topologically, residues 1 to 6 are extracellular; that stretch reads MQPIQI. Residues 7–27 form a helical membrane-spanning segment; it reads AIAALVVAIIIAIVVWSIVII. Residues 28-81 are Cytoplasmic-facing; the sequence is EYRKILRQRKIDRLIDRLIERAEDSGNESEGEISALVEMGVEMGHHAPWDIDDL. Residues S52 and S56 each carry the phosphoserine; by host CK2 modification.

Belongs to the HIV-1 VPU protein family. As to quaternary structure, homopentamer. Interacts with host CD4 and BRTC; these interactions induce proteasomal degradation of CD4. Interacts with host BST2; this interaction leads to the degradation of host BST2. Interacts with host FBXW11. Interacts with host AP1M1; this interaction plays a role in the mistrafficking and subsequent degradation of host BST2. Interacts with host RANBP2; this interaction allows Vpu to down-regulate host BLM sumoylation. Phosphorylated by host CK2. This phosphorylation is necessary for interaction with human BTRC and degradation of CD4.

The protein localises to the host membrane. Ion channel activity is inhibited by hexamethylene amiloride in vitro. Functionally, enhances virion budding by targeting host CD4 and Tetherin/BST2 to proteasome degradation. Degradation of CD4 prevents any unwanted premature interactions between viral Env and its host receptor CD4 in the endoplasmic reticulum. Degradation of antiretroviral protein Tetherin/BST2 is important for virion budding, as BST2 tethers new viral particles to the host cell membrane. Mechanistically, Vpu bridges either CD4 or BST2 to BTRC, a substrate recognition subunit of the Skp1/Cullin/F-box protein E3 ubiquitin ligase, induces their ubiquitination and subsequent proteasomal degradation. The alteration of the E3 ligase specificity by Vpu seems to promote the degradation of host IKBKB, leading to NF-kappa-B down-regulation and subsequent apoptosis. Acts as a viroporin that forms an oligomeric ion channel in membranes. Modulates the host DNA repair mechanisms to promote degradation of nuclear viral cDNA in cells that are already productively infected in order to suppress immune sensing and proviral hyper-integration (superinfection). Manipulates PML-NBs and modulates SUMOylation of host BLM protein thereby enhancing its DNA-end processing activity toward viral unintegrated linear DNA. Also inhibits RAD52-mediated homologous repair of viral cDNA, preventing the generation of dead-end circular forms of single copies of the long terminal repeat and permitting sustained nucleolytic attack. The chain is Protein Vpu from Homo sapiens (Human).